The following is a 339-amino-acid chain: Probable cytosolic iron-sulfur protein assembly protein CIAO1 (339 aa).

WD repeat units follow at residues 14 to 53 (HPDS…WICK), 59 to 98 (GHQR…FECV), 103 to 142 (GHEN…EYEC), 148 to 187 (SHTQ…WVCC), 192 to 231 (GHES…NEQG), 250 to 289 (FHSR…DPQQ), and 301 to 339 (AHSQ…SEGI). Residues 176–178 (LYR) carry the LYR motif; required for interaction with HSC20 motif.

This sequence belongs to the WD repeat CIA1 family. In terms of assembly, component of the CIA complex. Interacts with CIAO2A and forms a complex with CIAO2B and MMS19; the interactions with CIAO2A and CIAO2B are mutually exclusive. Interacts with CHD1L, ERCC2, IREB2 and POLD1. Component of the MMXD complex, which includes CIAO1, ERCC2, CIAO2B, MMS19 and SLC25A5. Interacts with WT1. Interacts with CIAO3. Interacts (via LYR motif) with HSC20.

It is found in the cytoplasm. In terms of biological role, key component of the cytosolic iron-sulfur protein assembly (CIA) complex, a multiprotein complex that mediates the incorporation of iron-sulfur cluster into extramitochondrial Fe/S proteins. As a CIA complex component, interacts specifically with CIAO2A or CIAO2B and MMS19 to assist different branches of iron-sulfur protein assembly, depending of its interactors. The complex CIAO1:CIAO2B:MMS19 binds to and facilitates the assembly of most cytosolic-nuclear Fe/S proteins. CIAO1:CIAO2A specifically matures ACO1 and stabilizes IREB2. Seems to specifically modulate the transactivation activity of WT1. As part of the mitotic spindle-associated MMXD complex it may play a role in chromosome segregation. This Bos taurus (Bovine) protein is Probable cytosolic iron-sulfur protein assembly protein CIAO1.